We begin with the raw amino-acid sequence, 1868 residues long: Dedicator of cytokinesis protein 5 (1868 aa).

An SH3 domain is found at K8 to A69. A Phosphoserine modification is found at S365. Residues R443–C627 enclose the C2 DOCK-type domain. K818 is subject to N6-acetyllysine. The 412-residue stretch at Y1231–L1642 folds into the DOCKER domain. Low complexity predominate over residues S1681 to S1692. 2 disordered regions span residues S1681–K1730 and Q1742–Q1868. The segment covering L1704–I1728 has biased composition (basic and acidic residues). Residues S1755, S1765, S1771, S1784, and S1788 each carry the phosphoserine modification. T1793 carries the post-translational modification Phosphothreonine. The segment covering A1796–L1810 has biased composition (polar residues). A phosphoserine mark is found at S1832 and S1867.

The protein belongs to the DOCK family. Interacts with CRK and CRKL. Interacts (via N-terminus) with tensin TNS3 (via N-terminus); the interaction increases DOCK5 guanine nucleotide exchange activity towards Rac. Interacts with ELMO1. As to expression, highly expressed in lens, where it predominantly localizes to anterior epithelial cells, and is weakly expressed in lens fiber (at protein level). Expressed in brain, eye, lung, spleen and kidney, but not in thymus or peripheral blood leukocytes.

It localises to the cytoplasm. The protein resides in the cell membrane. Its subcellular location is the cell projection. The protein localises to the podosome. Guanine nucleotide exchange factor (GEF) for Rho and Rac. GEF proteins activate small GTPases by exchanging bound GDP for free GTP. Along with DOCK1, mediates CRK/CRKL regulation of epithelial and endothelial cell spreading and migration on type IV collagen. This Mus musculus (Mouse) protein is Dedicator of cytokinesis protein 5.